The primary structure comprises 94 residues: MKFSNISIAALFTILASTAMAAPAADSPDSIVAREPAPVEETYEAPSGLEKRGFGCPGSEKKCHNHCKSVKGYKGGYCDGPYIPFVGRPRCKCY.

Residues M1 to A25 form the signal peptide. A propeptide spanning residues D26–C56 is cleaved from the precursor. Residues F54, G55, and C56 each coordinate beta-D-GlcNAc-(1-&gt;4)-Mur2Ac(oyl-L-Ala-gamma-D-Glu-L-Lys-D-Ala-D-Ala)-di-trans,octa-cis-undecaprenyl diphosphate. 3 cysteine pairs are disulfide-bonded: C56–C78, C63–C91, and C67–C93. The interaction site with membrane interface stretch occupies residues P57 to E60. H66 serves as a coordination point for beta-D-GlcNAc-(1-&gt;4)-Mur2Ac(oyl-L-Ala-gamma-D-Glu-L-Lys-D-Ala-D-Ala)-di-trans,octa-cis-undecaprenyl diphosphate. The interaction site with membrane interface stretch occupies residues I83 to R90. Beta-D-GlcNAc-(1-&gt;4)-Mur2Ac(oyl-L-Ala-gamma-D-Glu-L-Lys-D-Ala-D-Ala)-di-trans,octa-cis-undecaprenyl diphosphate is bound at residue C91.

It belongs to the invertebrate defensin family.

It localises to the secreted. It is found in the target cell membrane. Functionally, antibacterial peptide potently active against Gram-positive bacteria. May act by selectively inhibiting peptidoglycan biosynthesis through complex formation with the cell wall precursor lipid II (1:1 molar ratio) thus inhibiting cell wall synthesis. Shows remarkably activity against resistant isolates such as methicillin-resistant Staphylococcus aureus (MRSA) and vancomycin-resistant Enterococci (VRE) at the concentration of micromolar level. Does not act by destroying the membrane integrity, which is consistent with its nonamphiphilic architecture. Acts more rapidly than vancomycin. Shows low hemolysis and cytotoxicity and high serum stability. In vivo, is as efficient as vancomycin to protect mouse peritonitis models from MRSA infections. This is Fungal defensin scedosporisin-2 from Pseudallescheria apiosperma (Scedosporium apiospermum).